The sequence spans 735 residues: MGGKSEPAKSESMATKPDLLNTSFFSFKSLKLKTKQQELLLRISILGLVYILAFIARLFSVLRYESMIHEFDPYFNYRTTLFLTEKGFYEFWNWFDSESWYPLGRIIGGTLYPGLMVTAALIYWTLRFLRFFVHIREVCVLTAPFFASNTTLVAYFFGKELWDTGAGLVAAVLIAICPGYISRSVAGSYDNEAVAIFALLLTFYLFVKAVNTGSLAWALASAFGYFYMVSAWGGYVFIINLVPLYVLVLLITGRYSMRLYIAYNCMYILGMLLAMQIRFVGFQHVQSGEHMGAMGVFLLMQVFYFLDWVKYQLNDTKLFQTFLRITVTSAILVGGVAVGVGTASGYISPWTGRFYSLLDPTYAKDHIPIIASVSEHQPTAWSSFMFDYHILLFLFPAGLYFCFKRLTDATIFIVMYGLTSLYFAGVMVRLILVATPAVCLISAIAVSATIKNLTSLLRTKQKVSQTGSTKGAGSSKASSKVTLDQSQPFQKNGAIALLVGVFYLLSRYAIHCTWVTAEAYSSPSIVLAARGAHGNRIIFDDYREAYYWLRQNTATDAKIMSWWDYGYQITAMGNRTVIVDNNTWNNTHIATVGRAMSSYEDDAYDIMRSLDVNYVLVVFGGVTGYSSDDINKFLWMVRIGGGVFPVIKEPDYLVNGEFRVDKGASPKMLNCLMYKLCYYRFGELTTEYGKPPGYDRARGVEIGNKDIKLEHLEEAYTTSNWIVRIYRVKPPTNRL.

The Cytoplasmic segment spans residues 1–38; the sequence is MGGKSEPAKSESMATKPDLLNTSFFSFKSLKLKTKQQE. Residues 39–59 traverse the membrane as a helical segment; sequence LLLRISILGLVYILAFIARLF. Residues 60–142 lie on the Lumenal side of the membrane; that stretch reads SVLRYESMIH…VHIREVCVLT (83 aa). Residues 70-72 carry the DXD motif 1 motif; that stretch reads EFD. Asp-72 is a binding site for Mn(2+). The chain crosses the membrane as a helical span at residues 143-161; the sequence is APFFASNTTLVAYFFGKEL. Residues 162-163 are Cytoplasmic-facing; sequence WD. A helical membrane pass occupies residues 164–181; it reads TGAGLVAAVLIAICPGYI. Topologically, residues 182 to 192 are lumenal; sequence SRSVAGSYDNE. Residues Asp-190 and Glu-192 each coordinate Mn(2+). Positions 190-192 match the DXD motif 2 motif; sequence DNE. The helical transmembrane segment at 193–212 threads the bilayer; it reads AVAIFALLLTFYLFVKAVNT. The Cytoplasmic segment spans residues 213 to 214; sequence GS. A helical transmembrane segment spans residues 215–229; it reads LAWALASAFGYFYMV. Residues 230-234 are Lumenal-facing; that stretch reads SAWGG. The helical transmembrane segment at 235-251 threads the bilayer; it reads YVFIINLVPLYVLVLLI. The Cytoplasmic segment spans residues 252–256; the sequence is TGRYS. Residues 257 to 282 form a helical membrane-spanning segment; the sequence is MRLYIAYNCMYILGMLLAMQIRFVGF. Topologically, residues 283-290 are lumenal; sequence QHVQSGEH. A helical transmembrane segment spans residues 291-310; the sequence is MGAMGVFLLMQVFYFLDWVK. The Cytoplasmic segment spans residues 311–326; the sequence is YQLNDTKLFQTFLRIT. The helical transmembrane segment at 327 to 347 threads the bilayer; sequence VTSAILVGGVAVGVGTASGYI. The Lumenal portion of the chain corresponds to 348–380; sequence SPWTGRFYSLLDPTYAKDHIPIIASVSEHQPTA. The SVSE motif signature appears at 372 to 375; it reads SVSE. The helical transmembrane segment at 381-403 threads the bilayer; sequence WSSFMFDYHILLFLFPAGLYFCF. The Cytoplasmic portion of the chain corresponds to 404 to 409; sequence KRLTDA. The chain crosses the membrane as a helical span at residues 410–426; it reads TIFIVMYGLTSLYFAGV. The Lumenal portion of the chain corresponds to 427 to 430; it reads MVRL. Arg-429 serves as a coordination point for dolichyl diphosphooligosaccharide. A helical membrane pass occupies residues 431 to 452; sequence ILVATPAVCLISAIAVSATIKN. The Cytoplasmic portion of the chain corresponds to 453 to 494; the sequence is LTSLLRTKQKVSQTGSTKGAGSSKASSKVTLDQSQPFQKNGA. A helical membrane pass occupies residues 495 to 515; that stretch reads IALLVGVFYLLSRYAIHCTWV. The Lumenal segment spans residues 516 to 735; sequence TAEAYSSPSI…YRVKPPTNRL (220 aa). An interacts with target acceptor peptide in protein substrate region spans residues 562 to 564; sequence WWD. Positions 562-566 match the WWDYG motif motif; sequence WWDYG. Residue Tyr-567 coordinates dolichyl diphosphooligosaccharide. N-linked (GlcNAc...) asparagine glycans are attached at residues Asn-574 and Asn-581. Asn-585 carries an N-linked (GlcNAc...) (high mannose) asparagine glycan. Positions 629–636 match the DK motif motif; it reads DINKFLWM.

This sequence belongs to the STT3 family. In terms of assembly, component of the oligosaccharyltransferase (OST) complex. Requires Mg(2+) as cofactor. Mn(2+) serves as cofactor. Expressed preferentially in the root but also in the shoot.

It localises to the endoplasmic reticulum membrane. It catalyses the reaction a di-trans,poly-cis-dolichyl diphosphooligosaccharide + L-asparaginyl-[protein] = N(4)-(oligosaccharide-(1-&gt;4)-N-acetyl-beta-D-glucosaminyl-(1-&gt;4)-N-acetyl-beta-D-glucosaminyl)-L-asparaginyl-[protein] + a di-trans,poly-cis-dolichyl diphosphate + H(+). It participates in protein modification; protein glycosylation. Functionally, catalytic subunit of the oligosaccharyl transferase (OST) complex that catalyzes the initial transfer of a defined glycan (Glc(3)Man(9)GlcNAc(2) in eukaryotes) from the lipid carrier dolichol-pyrophosphate to an asparagine residue within an Asn-X-Ser/Thr consensus motif in nascent polypeptide chains, the first step in protein N-glycosylation. N-glycosylation occurs cotranslationally and the complex associates with the Sec61 complex at the channel-forming translocon complex that mediates protein translocation across the endoplasmic reticulum (ER). All subunits are required for a maximal enzyme activity. This subunit contains the active site and the acceptor peptide and donor lipid-linked oligosaccharide (LLO) binding pockets. The sequence is that of Dolichyl-diphosphooligosaccharide--protein glycosyltransferase subunit STT3B (STT3B) from Arabidopsis thaliana (Mouse-ear cress).